The primary structure comprises 121 residues: Large ribosomal subunit protein uL22 (121 aa).

This sequence belongs to the universal ribosomal protein uL22 family. In terms of assembly, part of the 50S ribosomal subunit.

Its function is as follows. This protein binds specifically to 23S rRNA; its binding is stimulated by other ribosomal proteins, e.g. L4, L17, and L20. It is important during the early stages of 50S assembly. It makes multiple contacts with different domains of the 23S rRNA in the assembled 50S subunit and ribosome. Functionally, the globular domain of the protein is located near the polypeptide exit tunnel on the outside of the subunit, while an extended beta-hairpin is found that lines the wall of the exit tunnel in the center of the 70S ribosome. The chain is Large ribosomal subunit protein uL22 from Arthrobacter sp. (strain FB24).